The following is a 123-amino-acid chain: MEQRALKHHRERLGEAIREEIGAILEGELGDPRIGLVTVSEVMIASNGKSAIVLVAVAGEEQEAVDTLEGLAAATGYIRHEVAARLGLRVAPELLFRLDQTERYGGRVEELLKRVNKRKKSSR.

This sequence belongs to the RbfA family. As to quaternary structure, monomer. Binds 30S ribosomal subunits, but not 50S ribosomal subunits or 70S ribosomes.

Its subcellular location is the cytoplasm. One of several proteins that assist in the late maturation steps of the functional core of the 30S ribosomal subunit. Associates with free 30S ribosomal subunits (but not with 30S subunits that are part of 70S ribosomes or polysomes). Required for efficient processing of 16S rRNA. May interact with the 5'-terminal helix region of 16S rRNA. The polypeptide is Ribosome-binding factor A (Koribacter versatilis (strain Ellin345)).